The chain runs to 217 residues: tRNA (guanine-N(7)-)-methyltransferase (217 aa).

Residues Glu44, Glu69, Asp96, and Asp118 each coordinate S-adenosyl-L-methionine. Residue Asp118 is part of the active site. Substrate is bound by residues Lys122, Asp154, and 191-194; that span reads TEYE.

This sequence belongs to the class I-like SAM-binding methyltransferase superfamily. TrmB family.

The enzyme catalyses guanosine(46) in tRNA + S-adenosyl-L-methionine = N(7)-methylguanosine(46) in tRNA + S-adenosyl-L-homocysteine. The protein operates within tRNA modification; N(7)-methylguanine-tRNA biosynthesis. Functionally, catalyzes the formation of N(7)-methylguanine at position 46 (m7G46) in tRNA. In Bacillus anthracis (strain CDC 684 / NRRL 3495), this protein is tRNA (guanine-N(7)-)-methyltransferase.